A 657-amino-acid polypeptide reads, in one-letter code: L-type lectin-domain containing receptor kinase I.8 (657 aa).

An N-terminal signal peptide occupies residues 1–23 (MAPGLDLIWMVISFLLLIHLSSQ). Over 24–282 (QETGFSFNGF…QVPHPKMKTS (259 aa)) the chain is Extracellular. A legume-lectin like region spans residues 25–257 (ETGFSFNGFR…NHYILGWSFS (233 aa)). N-linked (GlcNAc...) asparagine glycosylation is found at Asn-74, Asn-124, Asn-181, Asn-204, and Asn-225. The chain crosses the membrane as a helical span at residues 283–303 (LLLILLLIVLGIILLVLLVGA). Topologically, residues 304 to 657 (YLYRRNKYAE…THSIQYGIGR (354 aa)) are cytoplasmic. The Protein kinase domain maps to 339–611 (FHKDGFLGKG…VQYLDRQVSL (273 aa)). Residues 345-353 (LGKGGFGEV) and Lys-366 each bind ATP. Asp-462 functions as the Proton acceptor in the catalytic mechanism.

In the C-terminal section; belongs to the protein kinase superfamily. Ser/Thr protein kinase family. The protein in the N-terminal section; belongs to the leguminous lectin family.

It is found in the cell membrane. The catalysed reaction is L-seryl-[protein] + ATP = O-phospho-L-seryl-[protein] + ADP + H(+). It carries out the reaction L-threonyl-[protein] + ATP = O-phospho-L-threonyl-[protein] + ADP + H(+). In terms of biological role, involved in resistance response to the pathogenic fungus Alternaria brassicicola. The protein is L-type lectin-domain containing receptor kinase I.8 of Arabidopsis thaliana (Mouse-ear cress).